We begin with the raw amino-acid sequence, 296 residues long: MDDIETAKNLTVKARTAYSVWDVCRLFIEMIAPDVDIDIESKRKSDELLFPGYVIRPMESLTTGRPYGLDSSAEDSSVSSDSSAEVILPAAKMVKERFDSIGNGMLSSQEASQAAIDLMLQNNKLLDNRKQLYKSIAIIIGRLPEKDKKRATEMLMRKMDCTQLLVPPAPTEEDVMKLVSVVTQLLTLVPPDRQAALIGDLFIPESLKDIFNSFNELAAENRLQQKKSELEGRTEVNHANTNEEVPSRRTRSRDTNARGAYKLQNTITEGPKAVPTKKRRVATRVRGRKSRNTSRV.

Met-1 carries the N-acetylmethionine modification. Residues 1-57 (MDDIETAKNLTVKARTAYSVWDVCRLFIEMIAPDVDIDIESKRKSDELLFPGYVIRP) are interaction with REP1. The interval 58 to 296 (MESLTTGRPY…GRKSRNTSRV (239 aa)) is DNA-binding, and self-association. Positions 228 to 296 (SELEGRTEVN…GRKSRNTSRV (69 aa)) are disordered. Residues 275–296 (PTKKRRVATRVRGRKSRNTSRV) are compositionally biased toward basic residues. Residues 276 to 296 (TKKRRVATRVRGRKSRNTSRV) form a nuclear localization region.

In terms of assembly, interacts with REP1.

The protein localises to the nucleus. Functionally, part of the plasmid partitioning system, which ensures the equal distribution of replicated plasmid molecules to daughter cells. The plasmids exist as well-organized plasmid foci within the nucleus that stay together throughout the cell-cycle and act as entity during segregation, effetively reducing copy number to one. Plasmid partitioning requires the proteins REP1, REP2, and a cis-acting locus STB (REP3). REP1-REP2 stably associate with CSE4-containing chromatin at STB during S-phase, marking the locus with a centromeric tag, and thereby probably catching mitotic spindle microtubules to the plasmid cluster and coupling plasmid segregation to chromosome segregation. REP1-REP2 are required to recruit the cohesin complex to the STB locus for pairing of the replicated plasmid cluster, a prerequisite for successful plasmid segregation. REP1-REP2 also negatively regulate expression of site-specific recombinase FLP and of RAF1. In Saccharomyces cerevisiae (strain ATCC 204508 / S288c) (Baker's yeast), this protein is Partitioning protein REP2 (REP2).